The chain runs to 129 residues: Ropporin-1 (129 aa).

The RIIa domain maps to Pro-11–Ala-34.

Belongs to the ropporin family. As to quaternary structure, homodimer. Interacts with AKAP3. May interact with SPA17. Interacts with RHPN1. Interacts with FSCB; the interaction increases upon spermatozoa capacitation conditions. Interacts with CFAP61. Post-translationally, sumoylated, sumoylation decreases upon spermatozoa capacitation conditions.

The protein localises to the cell projection. Its subcellular location is the cilium. It is found in the flagellum. Its function is as follows. Important for male fertility. With ROPN1L, involved in fibrous sheath integrity and sperm motility, plays a role in PKA-dependent signaling processes required for spermatozoa capacitation. The sequence is that of Ropporin-1 from Mesocricetus auratus (Golden hamster).